We begin with the raw amino-acid sequence, 135 residues long: UPF0225 protein CV_3559 (135 aa).

Belongs to the UPF0225 family.

The chain is UPF0225 protein CV_3559 from Chromobacterium violaceum (strain ATCC 12472 / DSM 30191 / JCM 1249 / CCUG 213 / NBRC 12614 / NCIMB 9131 / NCTC 9757 / MK).